We begin with the raw amino-acid sequence, 234 residues long: Large ribosomal subunit protein uL1 (234 aa).

Belongs to the universal ribosomal protein uL1 family. In terms of assembly, part of the 50S ribosomal subunit.

Binds directly to 23S rRNA. The L1 stalk is quite mobile in the ribosome, and is involved in E site tRNA release. In terms of biological role, protein L1 is also a translational repressor protein, it controls the translation of the L11 operon by binding to its mRNA. This Baumannia cicadellinicola subsp. Homalodisca coagulata protein is Large ribosomal subunit protein uL1.